The chain runs to 116 residues: Immunoglobulin heavy variable 3-13 (116 aa).

The N-terminal stretch at 1–19 (MELGLSWVFLVAILEGVQC) is a signal peptide. The framework-1 stretch occupies residues 20–44 (EVQLVESGGGLVQPGGSLRLSCAAS). Positions 20–116 (EVQLVESGGG…GDTAVYYCAR (97 aa)) constitute an Ig-like domain. A disulfide bridge connects residues C41 and C114. The complementarity-determining-1 stretch occupies residues 45–52 (GFTFSSYD). Positions 53–69 (MHWVRQATGKGLEWVSA) are framework-2. Positions 70-76 (IGTAGDP) are complementarity-determining-2. The tract at residues 77–114 (YYPGSVKGRFTISRENAKNSLYLQMNSLRAGDTAVYYC) is framework-3. A complementarity-determining-3 region spans residues 115–116 (AR).

As to quaternary structure, immunoglobulins are composed of two identical heavy chains and two identical light chains; disulfide-linked.

It localises to the secreted. Its subcellular location is the cell membrane. V region of the variable domain of immunoglobulin heavy chains that participates in the antigen recognition. Immunoglobulins, also known as antibodies, are membrane-bound or secreted glycoproteins produced by B lymphocytes. In the recognition phase of humoral immunity, the membrane-bound immunoglobulins serve as receptors which, upon binding of a specific antigen, trigger the clonal expansion and differentiation of B lymphocytes into immunoglobulins-secreting plasma cells. Secreted immunoglobulins mediate the effector phase of humoral immunity, which results in the elimination of bound antigens. The antigen binding site is formed by the variable domain of one heavy chain, together with that of its associated light chain. Thus, each immunoglobulin has two antigen binding sites with remarkable affinity for a particular antigen. The variable domains are assembled by a process called V-(D)-J rearrangement and can then be subjected to somatic hypermutations which, after exposure to antigen and selection, allow affinity maturation for a particular antigen. The polypeptide is Immunoglobulin heavy variable 3-13 (Homo sapiens (Human)).